The sequence spans 218 residues: Phosphatidylserine decarboxylase proenzyme (218 aa).

Ser-187 acts as the Schiff-base intermediate with substrate; via pyruvic acid in catalysis. Position 187 is a pyruvic acid (Ser); by autocatalysis (Ser-187).

Belongs to the phosphatidylserine decarboxylase family. PSD-A subfamily. Heterodimer of a large membrane-associated beta subunit and a small pyruvoyl-containing alpha subunit. The cofactor is pyruvate. Post-translationally, is synthesized initially as an inactive proenzyme. Formation of the active enzyme involves a self-maturation process in which the active site pyruvoyl group is generated from an internal serine residue via an autocatalytic post-translational modification. Two non-identical subunits are generated from the proenzyme in this reaction, and the pyruvate is formed at the N-terminus of the alpha chain, which is derived from the carboxyl end of the proenzyme. The post-translation cleavage follows an unusual pathway, termed non-hydrolytic serinolysis, in which the side chain hydroxyl group of the serine supplies its oxygen atom to form the C-terminus of the beta chain, while the remainder of the serine residue undergoes an oxidative deamination to produce ammonia and the pyruvoyl prosthetic group on the alpha chain.

The protein localises to the cell membrane. The catalysed reaction is a 1,2-diacyl-sn-glycero-3-phospho-L-serine + H(+) = a 1,2-diacyl-sn-glycero-3-phosphoethanolamine + CO2. It functions in the pathway phospholipid metabolism; phosphatidylethanolamine biosynthesis; phosphatidylethanolamine from CDP-diacylglycerol: step 2/2. In terms of biological role, catalyzes the formation of phosphatidylethanolamine (PtdEtn) from phosphatidylserine (PtdSer). The chain is Phosphatidylserine decarboxylase proenzyme from Geobacter sulfurreducens (strain ATCC 51573 / DSM 12127 / PCA).